Here is a 2563-residue protein sequence, read N- to C-terminus: Compactin diketide synthase mlcB (2563 aa).

One can recognise a Ketosynthase family 3 (KS3) domain in the interval 29-450; it reads STPIAIVGMG…GSNAHVILES (422 aa). Active-site for beta-ketoacyl synthase activity residues include Cys-202, His-337, and His-372. The interval 568–915 is acyl and malonyl transferase; that stretch reads VFTGQGAQWH…TELISKGYGL (348 aa). The For malonyltransferase activity role is filled by Ser-658. The segment covering 951–960 has biased composition (basic and acidic residues); it reads EPRGSRESKQ. The tract at residues 951-971 is disordered; that stretch reads EPRGSRESKQRTHPPHTLIGS. The interval 966 to 1103 is N-terminal hotdog fold; that stretch reads HTLIGSRESL…GLIRSESERS (138 aa). The PKS/mFAS DH domain maps to 966 to 1284; the sequence is HTLIGSRESL…FQSVGSSFSD (319 aa). The active-site Proton acceptor; for dehydratase activity is the His-998. A dehydratase-like region spans residues 998-1010; the sequence is HVVGSSIIFPGAG. The C-terminal hotdog fold stretch occupies residues 1121-1284; sequence DNRSIDPNDL…FQSVGSSFSD (164 aa). Asp-1187 serves as the catalytic Proton donor; for dehydratase activity. Positions 1542 to 1579 are methyltransferase; sequence YDVVVACQVLHATRCMKRTLSNVRKLLKPGGNLILVET. One can recognise a Carrier domain in the interval 2485–2562; it reads EAISIVLKAM…GLVELVVAKC (78 aa). Ser-2522 is subject to O-(pantetheine 4'-phosphoryl)serine.

It depends on pantetheine 4'-phosphate as a cofactor.

The catalysed reaction is holo-[2-methylbutanoate polyketide synthase] + 2 malonyl-CoA + S-adenosyl-L-methionine + 2 NADPH + 3 H(+) = (S)-2-methylbutanoyl-[2-methylbutanoate polyketide synthase] + S-adenosyl-L-homocysteine + 2 CO2 + 2 NADP(+) + 2 CoA + H2O. Its pathway is polyketide biosynthesis. Functionally, diketide synthase; part of the gene cluster that mediates the biosynthesis of compactin, also known as mevastatin or ML-236B, and which acts as a potent competitive inhibitor of HMG-CoA reductase. Compactin biosynthesis is performed in two stages. The first stage is catalyzed by the nonaketide synthase mlcA, which belongs to type I polyketide synthases and catalyzes the iterative nine-step formation of the polyketide. This PKS stage is completed by the action of dehydrogenase mlcG, which catalyzes the NADPH-dependent reduction of the unsaturated tetra-, penta- and heptaketide intermediates that arise during the mlcA-mediated biosynthesis of the nonaketide chain and leads to dihydro-ML-236C carboxylate. Covalently bound dihydro-ML-236C carboxylate is released from mlcA by the mlcF esterase. Conversion of dihydro-ML-236C carboxylate into ML-236A carboxylate is subsequently performed with the participation of molecular oxygen and P450 monoogygenase mlcC. Finally, mlcH performs the conversion of ML-236A carboxylate to ML-236B/compactin carboxylate through the addition of the side-chain diketide moiety produced by the diketide synthase mlcB. The chain is Compactin diketide synthase mlcB (mlcB) from Penicillium citrinum.